A 384-amino-acid chain; its full sequence is Mannitol-1-phosphate 5-dehydrogenase (384 aa).

NAD(+) is bound at residue 5-16 (AVHFGAGNIGRG).

Belongs to the mannitol dehydrogenase family.

The enzyme catalyses D-mannitol 1-phosphate + NAD(+) = beta-D-fructose 6-phosphate + NADH + H(+). This chain is Mannitol-1-phosphate 5-dehydrogenase, found in Vibrio cholerae serotype O1 (strain ATCC 39541 / Classical Ogawa 395 / O395).